A 454-amino-acid polypeptide reads, in one-letter code: MESNYTGMDGNWALNGTVSVGNGTLISVDEFLHNALPMHLQALFQDGNSQGPLLTMEDLEKAIEFKRASQELVNDNVLAPDGLFVELLRQQEKTLPRLISATSNTQGSFSSWSFAQGLIVGQVSVVLVLIFFIKFFIFSDSSTKTNPNPAKNSSSTNSLSGLSSESRSFISPHFFTSIMNRKGNEQAESNDDENERSRQIDDILEKTYYNVDTHPAESLDWFNVLIGQTIQQLREEAWKKDNIVYSLNAFIERKAQELPSYLDSIKITELDIGHDFPIFSNCRIQYSPNSNGRKLEAKIDIDLNDRLAVGIETRLLLNYPKPLTASLPINVTVSIIRFQACLTVSLTKAEEFVPTSPESVDEDDNDGYFLMFSFAPEYRMEFETQSLIGARSKLENIPKIGSLVEYQIKKWFVERCVEPRFQFIKLPSVWPRSKNTREGKADVDESEPGRETHY.

The Lumenal portion of the chain corresponds to 1 to 117; it reads MESNYTGMDG…SFSSWSFAQG (117 aa). Residues 118-138 form a helical membrane-spanning segment; sequence LIVGQVSVVLVLIFFIKFFIF. At 139–454 the chain is on the cytoplasmic side; the sequence is SDSSTKTNPN…ESEPGRETHY (316 aa). Residues 144-164 form a disordered region; that stretch reads KTNPNPAKNSSSTNSLSGLSS. Residues 153–164 show a composition bias toward low complexity; sequence SSSTNSLSGLSS. Positions 215 to 427 constitute an SMP-LTD domain; the sequence is PAESLDWFNV…EPRFQFIKLP (213 aa). Residues arginine 253, tryptophan 411, arginine 415, tryptophan 430, arginine 432, and serine 433 each contribute to the a 1,2-diacyl-sn-glycero-3-phosphate site. The interval 434-454 is disordered; the sequence is KNTREGKADVDESEPGRETHY. The segment covering 435-454 has biased composition (basic and acidic residues); it reads NTREGKADVDESEPGRETHY.

The protein belongs to the MMM1 family. In terms of assembly, homodimer. Component of the ER-mitochondria encounter structure (ERMES) or MDM complex, composed of MMM1, MDM10, MDM12 and MDM34. An MMM1 homodimer associates with one molecule of MDM12 on each side in a pairwise head-to-tail manner, and the SMP-LTD domains of MMM1 and MDM12 generate a continuous hydrophobic tunnel for phospholipid trafficking.

It localises to the endoplasmic reticulum membrane. Functionally, component of the ERMES/MDM complex, which serves as a molecular tether to connect the endoplasmic reticulum (ER) and mitochondria. Components of this complex are involved in the control of mitochondrial shape and protein biogenesis, and function in nonvesicular lipid trafficking between the ER and mitochondria. Preferentially binds to glycerophospholipids such as phosphatidylcholoine (PC), phosphatidic acid (PA), phosphatidylglycerol (PG), and phosphatidylserine (PS), but not to phosphatidylethanolamine (PE). The MDM12-MMM1 subcomplex functions in the major beta-barrel assembly pathway that is responsible for biogenesis of all outer membrane beta-barrel proteins, and acts in a late step after the SAM complex. The MDM10-MDM12-MMM1 subcomplex further acts in the TOM40-specific pathway after the action of the MDM12-MMM1 complex. Essential for establishing and maintaining the structure of mitochondria and maintenance of mtDNA nucleoids. The sequence is that of Maintenance of mitochondrial morphology protein 1 from Zygosaccharomyces rouxii (strain ATCC 2623 / CBS 732 / NBRC 1130 / NCYC 568 / NRRL Y-229).